A 126-amino-acid chain; its full sequence is Large-conductance mechanosensitive channel (126 aa).

Helical transmembrane passes span 8-28 (FAMR…AAFT) and 70-90 (IQQI…VKVI).

The protein belongs to the MscL family. As to quaternary structure, homopentamer.

The protein resides in the cell membrane. Channel that opens in response to stretch forces in the membrane lipid bilayer. May participate in the regulation of osmotic pressure changes within the cell. This Exiguobacterium sp. (strain ATCC BAA-1283 / AT1b) protein is Large-conductance mechanosensitive channel.